The sequence spans 233 residues: Bcl-2-like protein 1 (233 aa).

The short motif at 4-24 (SNRELVVDFLSYKLSQKGYSW) is the BH4 element. Residues 28–71 (SDVEENRTEAPEGTESEMETPSAINGNPSWHLADSPAVNGATGH) are disordered. The residue at position 49 (Ser-49) is a Phosphoserine; by PLK3. The residue at position 62 (Ser-62) is a Phosphoserine; by CDK1. The short motif at 86–100 (VKQALREAGDEFELR) is the BH3 element. The short motif at 129 to 148 (ELFRDGVNWGRIVAFFSFGG) is the BH1 element. A BH2 motif is present at residues 180-195 (PWIQENGGWDTFVELY). The helical transmembrane segment at 210–226 (FNRWFLTGMTVAGVVLL) threads the bilayer.

Belongs to the Bcl-2 family. In terms of assembly, homodimer. Interacts with BCL2L11. Interacts with BAD. Interacts with PGAM5. Interacts with HEBP2. Interacts with p53/TP53 and BBC3; interaction with BBC3 disrupts the interaction with p53/TP53. Interacts with ATP5F1A and ATP5F1B; the interactions mediate the association of isoform Bcl-X(L) with the mitochondrial membrane ATP synthase F(1)F(0) ATP synthase. Interacts with VDAC1. Interacts with BCL2L11 (via BH3). Interacts with RNF183. Interacts with GIMAP3/IAN4 and GIMAP5/IAN5. Interacts with GIMAP5 and HSPA8/HSC70; the interaction between HSPA8 and BCL2L1 is impaired in the absence of GIMAP5. Interacts with isoform 4 of CLU; this interaction releases and activates BAX and promotes cell death. As to quaternary structure, forms heterodimers with BAX, BAK or BCL2; heterodimerization with BAX does not seem to be required for anti-apoptotic activity. Interacts with isoform 1 of SIVA1; the interaction inhibits the anti-apoptotic activity. Interacts with IKZF3. Interacts with RTL10/BOP. Interacts with DNM1L and CLTA; DNM1L and BCL2L1 isoform BCL-X(L) may form a complex in synaptic vesicles that also contains clathrin and MFF. Interacts (via the loop between motifs BH4 and BH3) with NLRP1 (via LRR repeats), but not with NLRP2, NLRP3, NLRP4, PYCARD, nor MEFV. Interacts with BECN1. In terms of processing, proteolytically cleaved by caspases during apoptosis. The cleaved protein, lacking the BH4 motif, has pro-apoptotic activity. Post-translationally, phosphorylated on Ser-62 by CDK1. This phosphorylation is partial in normal mitotic cells, but complete in G2-arrested cells upon DNA-damage, thus promoting subsequent apoptosis probably by triggering caspases-mediated proteolysis. Phosphorylated by PLK3, leading to regulate the G2 checkpoint and progression to cytokinesis during mitosis. Phosphorylation at Ser-49 appears during the S phase and G2, disappears rapidly in early mitosis during prometaphase, metaphase and early anaphase, and re-appears during telophase and cytokinesis. Ubiquitinated by RNF183 during prolonged ER stress, leading to degradation by the proteosome. In terms of tissue distribution, bcl-X(S) is expressed at high levels in cells that undergo a high rate of turnover, such as developing lymphocytes. In contrast, Bcl-X(L) is found in tissues containing long-lived postmitotic cells, such as adult brain.

It is found in the mitochondrion inner membrane. The protein resides in the mitochondrion outer membrane. Its subcellular location is the mitochondrion matrix. The protein localises to the cytoplasmic vesicle. It localises to the secretory vesicle. It is found in the synaptic vesicle membrane. The protein resides in the cytoplasm. Its subcellular location is the cytosol. The protein localises to the cytoskeleton. It localises to the microtubule organizing center. It is found in the centrosome. The protein resides in the nucleus membrane. Its function is as follows. Potent inhibitor of cell death. Inhibits activation of caspases. Appears to regulate cell death by blocking the voltage-dependent anion channel (VDAC) by binding to it and preventing the release of the caspase activator, CYC1, from the mitochondrial membrane. Also acts as a regulator of G2 checkpoint and progression to cytokinesis during mitosis. Functionally, isoform Bcl-X(L) also regulates presynaptic plasticity, including neurotransmitter release and recovery, number of axonal mitochondria as well as size and number of synaptic vesicle clusters. During synaptic stimulation, increases ATP availability from mitochondria through regulation of mitochondrial membrane ATP synthase F(1)F(0) activity and regulates endocytic vesicle retrieval in hippocampal neurons through association with DMN1L and stimulation of its GTPase activity in synaptic vesicles. May attenuate inflammation impairing NLRP1-inflammasome activation, hence CASP1 activation and IL1B release. In terms of biological role, isoform Bcl-X(S) promotes apoptosis. This Homo sapiens (Human) protein is Bcl-2-like protein 1 (BCL2L1).